The chain runs to 173 residues: Ribosome maturation factor RimM (173 aa).

One can recognise a PRC barrel domain in the interval 98 to 170 (EDEYYWCDLI…RMLITPLEGL (73 aa)).

Belongs to the RimM family. Binds ribosomal protein uS19.

Its subcellular location is the cytoplasm. In terms of biological role, an accessory protein needed during the final step in the assembly of 30S ribosomal subunit, possibly for assembly of the head region. Essential for efficient processing of 16S rRNA. May be needed both before and after RbfA during the maturation of 16S rRNA. It has affinity for free ribosomal 30S subunits but not for 70S ribosomes. This is Ribosome maturation factor RimM from Pelobacter propionicus (strain DSM 2379 / NBRC 103807 / OttBd1).